The chain runs to 277 residues: Deoxyguanosine kinase, mitochondrial (277 aa).

The N-terminal 39 residues, 1–39, are a transit peptide targeting the mitochondrion; sequence MAAGRFLLRRLRASFRSPLRNALVDAPHARAMHDGGGPR. ATP is bound at residue 45 to 53; it reads GNIAVGKST. Residues glutamate 70, tyrosine 100, glutamine 111, and arginine 118 each coordinate substrate. Glutamate 141 serves as the catalytic Proton acceptor. Arginine 142 and aspartate 147 together coordinate substrate. Position 206 to 208 (206 to 208) interacts with ATP; it reads RDR. Position 211 (glutamate 211) interacts with substrate. 254-256 provides a ligand contact to ATP; the sequence is EDF.

The protein belongs to the DCK/DGK family. Homodimer. Spleen and thymus. Expressed at much lower levels in the brain and liver.

The protein resides in the mitochondrion. The protein localises to the cytoplasm. It catalyses the reaction 2'-deoxyguanosine + ATP = dGMP + ADP + H(+). The catalysed reaction is 2'-deoxyadenosine + ATP = dAMP + ADP + H(+). Functionally, phosphorylates deoxyguanosine and deoxyadenosine in the mitochondrial matrix, with the highest efficiency for deoxyguanosine. In non-replicating cells, where cytosolic dNTP synthesis is down-regulated, mtDNA synthesis depends solely on DGUOK and TK2. Phosphorylates certain nucleoside analogs. Widely used as target of antiviral and chemotherapeutic agents. In Mus musculus (Mouse), this protein is Deoxyguanosine kinase, mitochondrial (Dguok).